A 348-amino-acid chain; its full sequence is Ion-translocating oxidoreductase complex subunit D (348 aa).

3 helical membrane passes run 20-39 (VMRL…CYLF), 67-87 (YVVS…LIAV), and 124-144 (AMVG…NWMA). FMN phosphoryl threonine is present on threonine 187. The next 4 helical transmembrane spans lie at 221–241 (WINL…LIPW), 244–264 (PVAM…LAPA), 266–286 (FAMP…FFII), and 300–320 (LVFG…GGYP).

Belongs to the NqrB/RnfD family. In terms of assembly, the complex is composed of six subunits: RnfA, RnfB, RnfC, RnfD, RnfE and RnfG. Requires FMN as cofactor.

Its subcellular location is the cell inner membrane. Part of a membrane-bound complex that couples electron transfer with translocation of ions across the membrane. In Tolumonas auensis (strain DSM 9187 / NBRC 110442 / TA 4), this protein is Ion-translocating oxidoreductase complex subunit D.